A 518-amino-acid polypeptide reads, in one-letter code: Glutamate--cysteine ligase (518 aa).

It belongs to the glutamate--cysteine ligase type 1 family. Type 1 subfamily.

The enzyme catalyses L-cysteine + L-glutamate + ATP = gamma-L-glutamyl-L-cysteine + ADP + phosphate + H(+). It participates in sulfur metabolism; glutathione biosynthesis; glutathione from L-cysteine and L-glutamate: step 1/2. The protein is Glutamate--cysteine ligase of Klebsiella pneumoniae subsp. pneumoniae (strain ATCC 700721 / MGH 78578).